The primary structure comprises 84 residues: U4-theraphotoxin-Hhn1b (84 aa).

The first 22 residues, 1–22, serve as a signal peptide directing secretion; it reads MKVTLIAILTCAAVLVLHTTAA. The propeptide occupies 23–47; sequence EELEESQLMEVGMPDTELAAVDEER. 3 cysteine pairs are disulfide-bonded: cysteine 51–cysteine 65, cysteine 55–cysteine 76, and cysteine 70–cysteine 81.

The protein belongs to the neurotoxin 12 (Hwtx-2) family. 02 (Hwtx-2) subfamily. As to expression, expressed by the venom gland.

It is found in the secreted. In terms of biological role, postsynaptic neurotoxin. The sequence is that of U4-theraphotoxin-Hhn1b from Cyriopagopus hainanus (Chinese bird spider).